Consider the following 174-residue polypeptide: NADH-ubiquinone oxidoreductase chain 6 (174 aa).

The next 6 helical transmembrane spans lie at 1-21, 24-44, 47-67, 86-106, 111-131, and 151-171; these read MTYV…GFSS, SPIY…TIIL, GGGY…MVVF, VEVL…VLWV, GVVV…EGEG, and WLVV…IEIA.

Belongs to the complex I subunit 6 family. In terms of assembly, core subunit of respiratory chain NADH dehydrogenase (Complex I) which is composed of 45 different subunits.

The protein localises to the mitochondrion inner membrane. It catalyses the reaction a ubiquinone + NADH + 5 H(+)(in) = a ubiquinol + NAD(+) + 4 H(+)(out). In terms of biological role, core subunit of the mitochondrial membrane respiratory chain NADH dehydrogenase (Complex I) which catalyzes electron transfer from NADH through the respiratory chain, using ubiquinone as an electron acceptor. Essential for the catalytic activity and assembly of complex I. This is NADH-ubiquinone oxidoreductase chain 6 (MT-ND6) from Pan paniscus (Pygmy chimpanzee).